We begin with the raw amino-acid sequence, 429 residues long: Serine hydroxymethyltransferase (429 aa).

Position 120 to 122 (120 to 122 (GHI)) interacts with (6S)-5,6,7,8-tetrahydrofolate. At K226 the chain carries N6-(pyridoxal phosphate)lysine.

It belongs to the SHMT family. In terms of assembly, homodimer. Pyridoxal 5'-phosphate is required as a cofactor.

It localises to the cytoplasm. It participates in amino-acid biosynthesis; glycine biosynthesis; glycine from L-serine: step 1/1. Functionally, catalyzes the reversible interconversion of serine and glycine with a modified folate serving as the one-carbon carrier. Also exhibits a pteridine-independent aldolase activity toward beta-hydroxyamino acids, producing glycine and aldehydes, via a retro-aldol mechanism. In Pyrobaculum arsenaticum (strain DSM 13514 / JCM 11321 / PZ6), this protein is Serine hydroxymethyltransferase.